Consider the following 374-residue polypeptide: Phosphate-binding protein PstS1 (374 aa).

The N-terminal stretch at 1-23 (MKIRLHTLLAVLTAAPLLLAAAG) is a signal peptide. A lipid anchor (N-palmitoyl cysteine) is attached at Cys-24. Cys-24 is lipidated: S-diacylglycerol cysteine. Residues 25–48 (GSKPPSGSPETGAGAGTVATTPAS) form a disordered region. Phosphate-binding positions include 58 to 60 (STL), Ser-88, Asp-106, and 189 to 191 (SGD).

This sequence belongs to the PstS family. In terms of assembly, the complex is composed of two ATP-binding proteins (PstB), two transmembrane proteins (PstC and PstA) and a solute-binding protein (PstS).

The protein localises to the cell membrane. Its subcellular location is the secreted. In terms of biological role, functions in inorganic phosphate uptake, a phosphate-binding protein, although probably not the main uptake protein under phosphate starvation. Part of the ABC transporter complex PstSACB involved in phosphate import. A host TLR2 agonist (toll-like receptor), requires both host TLR1 and TLR2 as coreceptors. The protein is Phosphate-binding protein PstS1 (pstS1) of Mycobacterium bovis (strain BCG / Pasteur 1173P2).